The chain runs to 228 residues: AA9 family lytic polysaccharide monooxygenase A (228 aa).

Cu(2+) is bound by residues histidine 1 and histidine 86. A Methylhistidine modification is found at histidine 1. Disulfide bonds link cysteine 56/cysteine 178 and cysteine 97/cysteine 101. Asparagine 138 is a glycosylation site (N-linked (GlcNAc...) asparagine). Positions 164 and 173 each coordinate O2. Tyrosine 175 contributes to the Cu(2+) binding site.

Belongs to the polysaccharide monooxygenase AA9 family. Cu(2+) is required as a cofactor. In terms of processing, the catalytically essential N-terminal histidine His-22 is post-translationally modified by methylation to prevent protonation of the histidine side chain, and protect the critical active site of the enzyme from oxidative damage.

It is found in the secreted. The enzyme catalyses [(1-&gt;4)-beta-D-glucosyl]n+m + reduced acceptor + O2 = 4-dehydro-beta-D-glucosyl-[(1-&gt;4)-beta-D-glucosyl]n-1 + [(1-&gt;4)-beta-D-glucosyl]m + acceptor + H2O.. Its activity is regulated as follows. Small amounts of H(2)O(2) boost LPMO activity, while higher amounts lead to inactivation of the enzyme. Functionally, lytic polysaccharide monooxygenase (LPMO) that depolymerizes crystalline and amorphous polysaccharides via the oxidation of scissile alpha- or beta-(1-4)-glycosidic bonds, yielding C1 and C4 oxidation product. Catalysis by LPMOs requires the reduction of the active-site copper from Cu(II) to Cu(I) by a reducing agent and H(2)O(2) or O(2) as a cosubstrate. Is able to cleave cellulose and xylan to produce C1- and C4-oxidized products. The protein is AA9 family lytic polysaccharide monooxygenase A of Thermoascus aurantiacus.